The primary structure comprises 420 residues: Bone morphogenetic protein 2 (420 aa).

The N-terminal stretch at 1–23 (MVAVVRSLMVLLLAQVLLEGATG) is a signal peptide. Positions 24–303 (LIPEVGRRRY…DSVLHTREKR (280 aa)) are excised as a propeptide. 5 N-linked (GlcNAc...) asparagine glycosylation sites follow: N138, N167, N168, N172, and N362. Intrachain disulfides connect C320–C385, C349–C417, and C353–C419.

Belongs to the TGF-beta family. In terms of assembly, homodimer; disulfide-linked.

The protein resides in the secreted. Induces cartilage and bone formation. In Tetraodon nigroviridis (Spotted green pufferfish), this protein is Bone morphogenetic protein 2 (bmp2).